The sequence spans 34 residues: U10-ctenitoxin-Pr1a (34 aa).

Cystine bridges form between Cys2–Cys15, Cys9–Cys20, Cys14–Cys31, and Cys22–Cys29.

In terms of tissue distribution, expressed by the venom gland.

The protein resides in the secreted. In terms of biological role, non-toxic to mice and insects. The polypeptide is U10-ctenitoxin-Pr1a (Phoneutria reidyi (Brazilian Amazonian armed spider)).